The sequence spans 249 residues: Tryptophan synthase alpha chain (249 aa).

Active-site proton acceptor residues include glutamate 43 and aspartate 54.

Belongs to the TrpA family. In terms of assembly, tetramer of two alpha and two beta chains.

It catalyses the reaction (1S,2R)-1-C-(indol-3-yl)glycerol 3-phosphate + L-serine = D-glyceraldehyde 3-phosphate + L-tryptophan + H2O. The protein operates within amino-acid biosynthesis; L-tryptophan biosynthesis; L-tryptophan from chorismate: step 5/5. In terms of biological role, the alpha subunit is responsible for the aldol cleavage of indoleglycerol phosphate to indole and glyceraldehyde 3-phosphate. The protein is Tryptophan synthase alpha chain of Campylobacter jejuni subsp. jejuni serotype O:23/36 (strain 81-176).